We begin with the raw amino-acid sequence, 57 residues long: MAGSFITVECPDCENEQSLFEKAASEVSCAVCGHTIARPTGGKADIEGEVTAVVEAR.

4 residues coordinate Zn(2+): C10, C13, C29, and C32. Residues 10-32 (CPDCENEQSLFEKAASEVSCAVC) form a C4-type zinc finger.

This sequence belongs to the eukaryotic ribosomal protein eS27 family. Part of the 30S ribosomal subunit. Zn(2+) serves as cofactor.

The chain is Small ribosomal subunit protein eS27 from Haloarcula marismortui (strain ATCC 43049 / DSM 3752 / JCM 8966 / VKM B-1809) (Halobacterium marismortui).